The following is a 231-amino-acid chain: Ribosomal RNA large subunit methyltransferase E (231 aa).

S-adenosyl-L-methionine contacts are provided by Gly-76, Trp-78, Asp-99, Asp-115, and Asp-139. Catalysis depends on Lys-179, which acts as the Proton acceptor.

This sequence belongs to the class I-like SAM-binding methyltransferase superfamily. RNA methyltransferase RlmE family.

It is found in the cytoplasm. It catalyses the reaction uridine(2552) in 23S rRNA + S-adenosyl-L-methionine = 2'-O-methyluridine(2552) in 23S rRNA + S-adenosyl-L-homocysteine + H(+). In terms of biological role, specifically methylates the uridine in position 2552 of 23S rRNA at the 2'-O position of the ribose in the fully assembled 50S ribosomal subunit. The protein is Ribosomal RNA large subunit methyltransferase E of Bradyrhizobium sp. (strain ORS 278).